A 298-amino-acid chain; its full sequence is Thymidylate synthase (298 aa).

Residues Arg-25 and 159 to 160 (RR) each bind dUMP. The active-site Nucleophile is Cys-179. Residues 200–203 (RSVD), Asn-211, and 241–243 (HLY) contribute to the dUMP site. Asp-203 is a (6R)-5,10-methylene-5,6,7,8-tetrahydrofolate binding site. Residue Ala-297 coordinates (6R)-5,10-methylene-5,6,7,8-tetrahydrofolate.

Belongs to the thymidylate synthase family. Bacterial-type ThyA subfamily. In terms of assembly, homodimer.

It is found in the cytoplasm. The catalysed reaction is dUMP + (6R)-5,10-methylene-5,6,7,8-tetrahydrofolate = 7,8-dihydrofolate + dTMP. It participates in pyrimidine metabolism; dTTP biosynthesis. In terms of biological role, catalyzes the reductive methylation of 2'-deoxyuridine-5'-monophosphate (dUMP) to 2'-deoxythymidine-5'-monophosphate (dTMP) while utilizing 5,10-methylenetetrahydrofolate (mTHF) as the methyl donor and reductant in the reaction, yielding dihydrofolate (DHF) as a by-product. This enzymatic reaction provides an intracellular de novo source of dTMP, an essential precursor for DNA biosynthesis. The chain is Thymidylate synthase from Cereibacter sphaeroides (strain ATCC 17029 / ATH 2.4.9) (Rhodobacter sphaeroides).